The chain runs to 354 residues: Serum paraoxonase/lactonase 3 (354 aa).

Residues cysteine 42 and cysteine 352 are joined by a disulfide bond. Asparagine 50 carries N-linked (GlcNAc...) asparagine glycosylation. Ca(2+) is bound by residues glutamate 53 and aspartate 54. Histidine 114 acts as the Proton acceptor in catalysis. Isoleucine 116 is a binding site for Ca(2+). Serine 165 carries the post-translational modification Phosphoserine. Asparagine 167, aspartate 168, asparagine 223, aspartate 268, and asparagine 269 together coordinate Ca(2+). 2 N-linked (GlcNAc...) asparagine glycosylation sites follow: asparagine 269 and asparagine 323.

Belongs to the paraoxonase family. As to quaternary structure, homodimer. Ca(2+) serves as cofactor. Glycosylated. Post-translationally, the signal sequence is not cleaved.

It localises to the secreted. The protein localises to the extracellular space. It carries out the reaction a phenyl acetate + H2O = a phenol + acetate + H(+). The catalysed reaction is An aryl dialkyl phosphate + H2O = dialkyl phosphate + an aryl alcohol.. The enzyme catalyses an N-acyl-L-homoserine lactone + H2O = an N-acyl-L-homoserine + H(+). Has low activity towards the organophosphate paraxon and aromatic carboxylic acid esters. Rapidly hydrolyzes lactones such as statin prodrugs (e.g. lovastatin). Hydrolyzes aromatic lactones and 5- or 6-member ring lactones with aliphatic substituents but not simple lactones or those with polar substituents. The polypeptide is Serum paraoxonase/lactonase 3 (Pon3) (Mus musculus (Mouse)).